The sequence spans 318 residues: UDP-N-acetylenolpyruvoylglucosamine reductase (318 aa).

In terms of domain architecture, FAD-binding PCMH-type spans 38 to 204; that stretch reads IGGICPVVVE…LGIEILLKEG (167 aa). Residue arginine 182 is part of the active site. A disordered region spans residues 212–232; it reads SLKDKRDRRNSSQPENKKSAG. Over residues 213-229 the composition is skewed to basic and acidic residues; sequence LKDKRDRRNSSQPENKK. Serine 233 acts as the Proton donor in catalysis. The active site involves glutamate 310.

Belongs to the MurB family. The cofactor is FAD.

Its subcellular location is the cytoplasm. It catalyses the reaction UDP-N-acetyl-alpha-D-muramate + NADP(+) = UDP-N-acetyl-3-O-(1-carboxyvinyl)-alpha-D-glucosamine + NADPH + H(+). The protein operates within cell wall biogenesis; peptidoglycan biosynthesis. In terms of biological role, cell wall formation. The chain is UDP-N-acetylenolpyruvoylglucosamine reductase from Leptospira borgpetersenii serovar Hardjo-bovis (strain L550).